The following is a 206-amino-acid chain: Small ribosomal subunit protein uS5 (206 aa).

The span at 1 to 23 (MTDTPTKQENQSKTENPPSSNAN) shows a compositional bias: polar residues. Residues 1-52 (MTDTPTKQENQSKTENPPSSNANEQRRGNRNNDRKRNRRGDSKNERDSEWQE) form a disordered region. Residues 24 to 52 (EQRRGNRNNDRKRNRRGDSKNERDSEWQE) show a composition bias toward basic and acidic residues. One can recognise an S5 DRBM domain in the interval 50–113 (WQERVVQIRR…SDGKKHLVRV (64 aa)).

The protein belongs to the universal ribosomal protein uS5 family. In terms of assembly, part of the 30S ribosomal subunit. Contacts proteins S4 and S8.

Functionally, with S4 and S12 plays an important role in translational accuracy. Located at the back of the 30S subunit body where it stabilizes the conformation of the head with respect to the body. The sequence is that of Small ribosomal subunit protein uS5 from Prochlorococcus marinus subsp. pastoris (strain CCMP1986 / NIES-2087 / MED4).